The chain runs to 88 residues: MSRVIHISSNEELDKHLQAERLVIDFSAAWCGPCRAISPVFEKLSNEFVTFTFVHVDIDKLSGHPIVKEIRSVPTFYFYRNGAKVSEF.

Residues 2 to 88 (SRVIHISSNE…YRNGAKVSEF (87 aa)) form the Thioredoxin domain. Active-site nucleophile residues include Cys31 and Cys34. Cys31 and Cys34 are joined by a disulfide.

It belongs to the thioredoxin family.

Its function is as follows. Participates in various redox reactions through the reversible oxidation of its active center dithiol to a disulfide and catalyzes dithiol-disulfide exchange reactions. This Dictyostelium discoideum (Social amoeba) protein is Thioredoxin-2 (trxB).